Consider the following 191-residue polypeptide: Imidazoleglycerol-phosphate dehydratase (191 aa).

The protein belongs to the imidazoleglycerol-phosphate dehydratase family.

It localises to the cytoplasm. It catalyses the reaction D-erythro-1-(imidazol-4-yl)glycerol 3-phosphate = 3-(imidazol-4-yl)-2-oxopropyl phosphate + H2O. It functions in the pathway amino-acid biosynthesis; L-histidine biosynthesis; L-histidine from 5-phospho-alpha-D-ribose 1-diphosphate: step 6/9. The sequence is that of Imidazoleglycerol-phosphate dehydratase from Thermodesulfovibrio yellowstonii (strain ATCC 51303 / DSM 11347 / YP87).